Reading from the N-terminus, the 119-residue chain is Beta-2-microglobulin (119 aa).

Residues 1–20 form the signal peptide; that stretch reads MARFVAVALLVLLSLSGLET. Residues 25 to 114 form the Ig-like C1-type domain; it reads PKIQVYSRHP…VTFSTPKTVK (90 aa). A disulfide bridge links Cys45 with Cys100.

This sequence belongs to the beta-2-microglobulin family. In terms of assembly, heterodimer of an alpha chain and a beta chain. Beta-2-microglobulin is the beta-chain of major histocompatibility complex class I molecules.

Its subcellular location is the secreted. In terms of biological role, component of the class I major histocompatibility complex (MHC). Involved in the presentation of peptide antigens to the immune system. This is Beta-2-microglobulin (B2M) from Callicebus personatus personatus (Masked titi).